A 346-amino-acid polypeptide reads, in one-letter code: 36.4 kDa proline-rich protein (346 aa).

The tract at residues 11-144 (PYPPSTPKHP…PFTPKPPSPI (134 aa)) is disordered. 3 stretches are compositionally biased toward pro residues: residues 25–42 (KVKP…PSTP), 51–81 (VKPP…PSTP), and 89–144 (QKPC…PSPI).

The sequence is that of 36.4 kDa proline-rich protein (TPRP-F1) from Solanum lycopersicum (Tomato).